A 185-amino-acid chain; its full sequence is Ribosome-recycling factor (185 aa).

This sequence belongs to the RRF family.

The protein localises to the cytoplasm. In terms of biological role, responsible for the release of ribosomes from messenger RNA at the termination of protein biosynthesis. May increase the efficiency of translation by recycling ribosomes from one round of translation to another. In Geobacillus kaustophilus (strain HTA426), this protein is Ribosome-recycling factor.